Here is a 135-residue protein sequence, read N- to C-terminus: Putative pre-16S rRNA nuclease (135 aa).

It belongs to the YqgF nuclease family.

The protein resides in the cytoplasm. Could be a nuclease involved in processing of the 5'-end of pre-16S rRNA. This chain is Putative pre-16S rRNA nuclease, found in Clostridium novyi (strain NT).